Here is a 361-residue protein sequence, read N- to C-terminus: Phenylalanine--tRNA ligase alpha subunit (361 aa).

Glu-260 provides a ligand contact to Mg(2+).

Belongs to the class-II aminoacyl-tRNA synthetase family. Phe-tRNA synthetase alpha subunit type 1 subfamily. In terms of assembly, tetramer of two alpha and two beta subunits. Mg(2+) is required as a cofactor.

The protein resides in the cytoplasm. It catalyses the reaction tRNA(Phe) + L-phenylalanine + ATP = L-phenylalanyl-tRNA(Phe) + AMP + diphosphate + H(+). This chain is Phenylalanine--tRNA ligase alpha subunit, found in Bartonella henselae (strain ATCC 49882 / DSM 28221 / CCUG 30454 / Houston 1) (Rochalimaea henselae).